We begin with the raw amino-acid sequence, 382 residues long: MKALHFGAGNIGRGFIGKLLADAGIQLTFADVNQVVLDALNARHSYQVHVVGETEQVDTVSGVDAVSSIGDDVVDLIAQVDLVTTAVGPVVLERIAPAIAKGLVKRKEQGNESPLNIIACENMVRGTTQLKGHVMNALPEDAKAWVEEHVGFVDSAVDRIVPPSASATNDPLEVTVETFSEWIVDKTQFKGALPNIPGMELTDNLMAFVERKLFTLNTGHAITAYLGKLAGHQTIRDAILDEKIRAVVKGAMEESGAVLIKRYGFDADKHAAYIQKILGRFENPYLKDDVERVGRQPLRKLSAGDRLIKPLLGTLEYSLPHKNLIQGIAGAMHFRSEDDPQAQELAALIADKGPQAALAQISDLDANSEVVSEAVTAYKAMQ.

3–14 (ALHFGAGNIGRG) is a binding site for NAD(+). Lys269 bears the N6-acetyllysine mark.

It belongs to the mannitol dehydrogenase family. Monomer.

The enzyme catalyses D-mannitol 1-phosphate + NAD(+) = beta-D-fructose 6-phosphate + NADH + H(+). The sequence is that of Mannitol-1-phosphate 5-dehydrogenase from Escherichia coli O157:H7.